Here is a 90-residue protein sequence, read N- to C-terminus: MMTRVFLAMFFLLVLTKGWPRLYDGDCTRGPNMHITCFKDQSCGLIVKRNGRLSCTLNCKCRRNESCLPSEEVDWDNRNMKIVICPKPWF.

Positions 1-18 (MMTRVFLAMFFLLVLTKG) are cleaved as a signal peptide.

It belongs to the E superfamily. Post-translationally, contains 4 disulfide bonds. Expressed by the venom duct.

The protein localises to the secreted. This is Conotoxin Vc22.1 from Conus victoriae (Queen Victoria cone).